Consider the following 38-residue polypeptide: Kunitz-type trypsin inhibitor beta chain (38 aa).

It belongs to the protease inhibitor I3 (leguminous Kunitz-type inhibitor) family. In terms of assembly, heterodimer of an alpha and a beta chain linked by a disulfide bond.

Its function is as follows. Inhibition of trypsin. This chain is Kunitz-type trypsin inhibitor beta chain, found in Neltuma juliflora (Mesquite).